The chain runs to 74 residues: ATP synthase subunit c (74 aa).

Helical transmembrane passes span 5-25 and 49-69; these read LAHI…IGVG and LFIG…VALL.

Belongs to the ATPase C chain family. As to quaternary structure, F-type ATPases have 2 components, F(1) - the catalytic core - and F(0) - the membrane proton channel. F(1) has five subunits: alpha(3), beta(3), gamma(1), delta(1), epsilon(1). F(0) has three main subunits: a(1), b(2) and c(10-14). The alpha and beta chains form an alternating ring which encloses part of the gamma chain. F(1) is attached to F(0) by a central stalk formed by the gamma and epsilon chains, while a peripheral stalk is formed by the delta and b chains.

The protein resides in the cell inner membrane. F(1)F(0) ATP synthase produces ATP from ADP in the presence of a proton or sodium gradient. F-type ATPases consist of two structural domains, F(1) containing the extramembraneous catalytic core and F(0) containing the membrane proton channel, linked together by a central stalk and a peripheral stalk. During catalysis, ATP synthesis in the catalytic domain of F(1) is coupled via a rotary mechanism of the central stalk subunits to proton translocation. In terms of biological role, key component of the F(0) channel; it plays a direct role in translocation across the membrane. A homomeric c-ring of between 10-14 subunits forms the central stalk rotor element with the F(1) delta and epsilon subunits. The polypeptide is ATP synthase subunit c (Ruegeria pomeroyi (strain ATCC 700808 / DSM 15171 / DSS-3) (Silicibacter pomeroyi)).